The primary structure comprises 130 residues: Small ribosomal subunit protein uS9 (130 aa).

The protein belongs to the universal ribosomal protein uS9 family.

The protein is Small ribosomal subunit protein uS9 of Buchnera aphidicola subsp. Acyrthosiphon pisum (strain Tuc7).